We begin with the raw amino-acid sequence, 250 residues long: tRNA (guanine-N(1)-)-methyltransferase (250 aa).

Residues Gly-116 and 136-141 contribute to the S-adenosyl-L-methionine site; that span reads IGDYVL.

Belongs to the RNA methyltransferase TrmD family. In terms of assembly, homodimer.

Its subcellular location is the cytoplasm. The catalysed reaction is guanosine(37) in tRNA + S-adenosyl-L-methionine = N(1)-methylguanosine(37) in tRNA + S-adenosyl-L-homocysteine + H(+). Its function is as follows. Specifically methylates guanosine-37 in various tRNAs. In Stutzerimonas stutzeri (strain A1501) (Pseudomonas stutzeri), this protein is tRNA (guanine-N(1)-)-methyltransferase.